The chain runs to 299 residues: MIHNNRLRIVMQKNWKLSSDSKDLLVRCGIKINLCKQKLIAFSENMPIDVMCVRDDDIPGLIMDGIVDIGIIGENVLEEEVLSRKLRLDSVDYIKLKRLDFGVCRLSLAVPIDKEYTDIYCLNNSRIATSYPHLLKKYFDKKNIIFKSCMLNGSVEVAPRAGLSDAICDLVSTGATLEANGLREVQIIFRSKACLICKTGNISVEKQNVINTLMTRIQGVIKARESKYIMLHAPIKKLEEVIDLLHGAERPTILKLAGDDSRVAMHMVSSETLFWETMEKLKLLGASSILVLPIEKMME.

It belongs to the ATP phosphoribosyltransferase family. Long subfamily. Equilibrium between an active dimeric form, an inactive hexameric form and higher aggregates. Interconversion between the various forms is largely reversible and is influenced by the natural substrates and inhibitors of the enzyme. Requires Mg(2+) as cofactor.

The protein resides in the cytoplasm. It catalyses the reaction 1-(5-phospho-beta-D-ribosyl)-ATP + diphosphate = 5-phospho-alpha-D-ribose 1-diphosphate + ATP. It functions in the pathway amino-acid biosynthesis; L-histidine biosynthesis; L-histidine from 5-phospho-alpha-D-ribose 1-diphosphate: step 1/9. With respect to regulation, feedback inhibited by histidine. Its function is as follows. Catalyzes the condensation of ATP and 5-phosphoribose 1-diphosphate to form N'-(5'-phosphoribosyl)-ATP (PR-ATP). Has a crucial role in the pathway because the rate of histidine biosynthesis seems to be controlled primarily by regulation of HisG enzymatic activity. The chain is ATP phosphoribosyltransferase from Buchnera aphidicola subsp. Melaphis rhois.